Consider the following 164-residue polypeptide: Phosphopantetheine adenylyltransferase (164 aa).

Thr-9 contacts substrate. Residues Thr-9–Phe-10 and His-17 contribute to the ATP site. Residues Lys-41, Leu-78, and Arg-92 each coordinate substrate. Residues Gly-93–Arg-95, Glu-103, and Arg-128–Lys-134 contribute to the ATP site.

This sequence belongs to the bacterial CoaD family. In terms of assembly, homohexamer. Requires Mg(2+) as cofactor.

It is found in the cytoplasm. It carries out the reaction (R)-4'-phosphopantetheine + ATP + H(+) = 3'-dephospho-CoA + diphosphate. The protein operates within cofactor biosynthesis; coenzyme A biosynthesis; CoA from (R)-pantothenate: step 4/5. Functionally, reversibly transfers an adenylyl group from ATP to 4'-phosphopantetheine, yielding dephospho-CoA (dPCoA) and pyrophosphate. The polypeptide is Phosphopantetheine adenylyltransferase (Paracoccus denitrificans (strain Pd 1222)).